The sequence spans 213 residues: Large ribosomal subunit protein uL23 (213 aa).

Residues 1–117 are large ribosomal subunit protein uL23; the sequence is MNHNEIIKYP…KSTSELKLEE (117 aa). The interval 118 to 213 is unknown; that stretch reads KIAAKIAAKE…TTKKTTTKKV (96 aa).

Belongs to the universal ribosomal protein uL23 family. In terms of assembly, part of the 50S ribosomal subunit. Contacts protein L29, and trigger factor when it is bound to the ribosome.

Its function is as follows. One of the early assembly proteins it binds 23S rRNA. One of the proteins that surrounds the polypeptide exit tunnel on the outside of the ribosome. Forms the main docking site for trigger factor binding to the ribosome. The sequence is that of Large ribosomal subunit protein uL23 from Mycoplasma mobile (strain ATCC 43663 / 163K / NCTC 11711) (Mesomycoplasma mobile).